Reading from the N-terminus, the 260-residue chain is Pyridoxine 5'-phosphate synthase (260 aa).

Residues asparagine 10 and arginine 21 each contribute to the 3-amino-2-oxopropyl phosphate site. The Proton acceptor role is filled by histidine 46. 1-deoxy-D-xylulose 5-phosphate contacts are provided by arginine 48 and histidine 53. The active-site Proton acceptor is glutamate 76. Residue threonine 113 coordinates 1-deoxy-D-xylulose 5-phosphate. Histidine 204 (proton donor) is an active-site residue. 3-amino-2-oxopropyl phosphate is bound by residues aspartate 205 and 227 to 228; that span reads GH.

The protein belongs to the PNP synthase family. Homooctamer; tetramer of dimers.

Its subcellular location is the cytoplasm. It carries out the reaction 3-amino-2-oxopropyl phosphate + 1-deoxy-D-xylulose 5-phosphate = pyridoxine 5'-phosphate + phosphate + 2 H2O + H(+). Its pathway is cofactor biosynthesis; pyridoxine 5'-phosphate biosynthesis; pyridoxine 5'-phosphate from D-erythrose 4-phosphate: step 5/5. In terms of biological role, catalyzes the complicated ring closure reaction between the two acyclic compounds 1-deoxy-D-xylulose-5-phosphate (DXP) and 3-amino-2-oxopropyl phosphate (1-amino-acetone-3-phosphate or AAP) to form pyridoxine 5'-phosphate (PNP) and inorganic phosphate. The polypeptide is Pyridoxine 5'-phosphate synthase (Xylella fastidiosa (strain M23)).